Reading from the N-terminus, the 351-residue chain is Anthranilate phosphoribosyltransferase (351 aa).

Residues Gly80, 83–84 (GD), Thr88, 90–93 (NIST), 108–116 (KHGNRSITS), and Ser120 each bind 5-phospho-alpha-D-ribose 1-diphosphate. Gly80 is an anthranilate binding site. Ser92 is a Mg(2+) binding site. Position 111 (Asn111) interacts with anthranilate. Arg166 is a binding site for anthranilate. Asp229 and Glu230 together coordinate Mg(2+).

Belongs to the anthranilate phosphoribosyltransferase family. As to quaternary structure, homodimer. Requires Mg(2+) as cofactor.

It carries out the reaction N-(5-phospho-beta-D-ribosyl)anthranilate + diphosphate = 5-phospho-alpha-D-ribose 1-diphosphate + anthranilate. Its pathway is amino-acid biosynthesis; L-tryptophan biosynthesis; L-tryptophan from chorismate: step 2/5. Its function is as follows. Catalyzes the transfer of the phosphoribosyl group of 5-phosphorylribose-1-pyrophosphate (PRPP) to anthranilate to yield N-(5'-phosphoribosyl)-anthranilate (PRA). The protein is Anthranilate phosphoribosyltransferase of Chlorobaculum parvum (strain DSM 263 / NCIMB 8327) (Chlorobium vibrioforme subsp. thiosulfatophilum).